The following is a 163-amino-acid chain: ADP-ribosylation factor-like protein 2-binding protein (163 aa).

This sequence belongs to the ARL2BP family. Interacts with GTP bound ARL2 and ARL3; the complex ARL2-ARL2BP as well as ARL2BP alone, binds to SLC25A4/ANT1. Interaction with ARL2 may be required for cilia basal body localization. Interacts with STAT3; interaction is enhanced with ARL2. Found in a complex with ARL2BP, ARL2 and SLC25A6. Found in a complex with ARL2, ARL2BP and SLC25A4. Interacts with STAT2, STAT3 and STAT4.

Its subcellular location is the cytoplasm. It localises to the mitochondrion intermembrane space. The protein localises to the cytoskeleton. The protein resides in the microtubule organizing center. It is found in the centrosome. Its subcellular location is the nucleus. It localises to the spindle. The protein localises to the cilium basal body. Together with ARL2, plays a role in the nuclear translocation, retention and transcriptional activity of STAT3. May play a role as an effector of ARL2. This Macaca fascicularis (Crab-eating macaque) protein is ADP-ribosylation factor-like protein 2-binding protein (ARL2BP).